Reading from the N-terminus, the 1762-residue chain is Lysine-specific demethylase 3B (1762 aa).

Alanine 2 bears the N-acetylalanine mark. Disordered regions lie at residues 253–350 (MDSS…FVPQ) and 426–468 (TTAS…NSSL). Residues 299-310 (ATKKLKGDRGEV) show a composition bias toward basic and acidic residues. The segment covering 426–435 (TTASSTPTTV) has biased composition (low complexity). Residues 453 to 465 (GSWSQASGENSRN) show a composition bias toward polar residues. Phosphoserine occurs at positions 493, 547, 557, and 561. The segment at 574–613 (SVLGADTQPGPKAGSSVDRKVPAESMPTLTPAFPRSLLNT) is disordered. A Phosphothreonine modification is found at threonine 615. The span at 713 to 746 (TGSPSLSAVGNGRSSSPTNSLTQPIEMPTLSSSP) shows a compositional bias: polar residues. The disordered stretch occupies residues 713–763 (TGSPSLSAVGNGRSSSPTNSLTQPIEMPTLSSSPTEERPTVGPGQQDNPLL). Phosphoserine is present on residues serine 767, serine 774, and serine 779. A Glycyl lysine isopeptide (Lys-Gly) (interchain with G-Cter in SUMO2) cross-link involves residue lysine 789. Serine 799 carries the phosphoserine modification. Residues 806–853 (ACRQDSDSSTNSDLSDLSDSEEQLQAKSGLKGIPEHLMGKLGPNGERS) form a disordered region. The C6-type zinc-finger motif lies at 1032-1057 (CDVCETTLFNIHWVCRKCGFGVCLDC). The segment covering 1146-1163 (QLPSVTPSASSGNETTFS) has biased composition (polar residues). The disordered stretch occupies residues 1146 to 1217 (QLPSVTPSAS…AIRPPCPDTA (72 aa)). Serine 1254 and serine 1260 each carry phosphoserine. The interval 1285–1306 (SNSKTEGSSLRDLLHSGPGKLP) is disordered. An LXXLL motif motif is present at residues 1294 to 1298 (LRDLL). The 224-residue stretch at 1499–1722 (MPTRFEDLME…HCFRLTQEFR (224 aa)) folds into the JmjC domain. Histidine 1561, aspartate 1563, and histidine 1690 together coordinate Fe cation.

It belongs to the JHDM2 histone demethylase family. Fe(2+) is required as a cofactor.

Its subcellular location is the nucleus. It carries out the reaction N(6),N(6)-dimethyl-L-lysyl(9)-[histone H3] + 2 2-oxoglutarate + 2 O2 = L-lysyl(9)-[histone H3] + 2 formaldehyde + 2 succinate + 2 CO2. In terms of biological role, histone demethylase that specifically demethylates 'Lys-9' of histone H3, thereby playing a central role in histone code. Demethylation of Lys residue generates formaldehyde and succinate May have tumor suppressor activity. The sequence is that of Lysine-specific demethylase 3B (Kdm3b) from Mus musculus (Mouse).